The following is a 160-amino-acid chain: Endoribonuclease YbeY (160 aa).

Histidine 112, histidine 116, and histidine 122 together coordinate Zn(2+).

Belongs to the endoribonuclease YbeY family. The cofactor is Zn(2+).

The protein localises to the cytoplasm. In terms of biological role, single strand-specific metallo-endoribonuclease involved in late-stage 70S ribosome quality control and in maturation of the 3' terminus of the 16S rRNA. This chain is Endoribonuclease YbeY, found in Maricaulis maris (strain MCS10) (Caulobacter maris).